We begin with the raw amino-acid sequence, 615 residues long: Lipoprotein LpqB (615 aa).

Positions 1–29 (MGADRGRGGRRRPARVVAYAVGGVVLLAG) are cleaved as a signal peptide. Cysteine 30 carries the N-palmitoyl cysteine lipid modification. Cysteine 30 is lipidated: S-diacylglycerol cysteine. The tract at residues 100–123 (PDESATVLAGGPGTESDHSGNRED) is disordered. Residues 114–123 (ESDHSGNRED) show a composition bias toward basic and acidic residues.

Belongs to the LpqB lipoprotein family.

It is found in the cell membrane. This Streptomyces coelicolor (strain ATCC BAA-471 / A3(2) / M145) protein is Lipoprotein LpqB.